Reading from the N-terminus, the 427-residue chain is Nucleolar and spindle-associated protein 1 (427 aa).

The segment at 41 to 190 (AHLNPETRKE…LGNNKRTSAT (150 aa)) is disordered. A compositionally biased stretch (basic and acidic residues) spans 43-55 (LNPETRKENKNQD). The span at 83 to 96 (TKTRRRRRKKHKTI) shows a compositional bias: basic residues. Low complexity predominate over residues 119–128 (NFQNQENQEN). Serine 139 bears the Phosphoserine mark. Residues 159–179 (NDIKDSKKPLEKRSLCTDEFS) are compositionally biased toward basic and acidic residues. The segment covering 181 to 190 (LGNNKRTSAT) has biased composition (polar residues). Residue threonine 191 is modified to Phosphothreonine. The tract at residues 235–312 (IVTPVPPRGR…QAVFRTPKSK (78 aa)) is disordered. Residues 243–367 (GRLSVPCTPA…HKGKLKPWGQ (125 aa)) are interaction with microtubules. The residue at position 246 (serine 246) is a Phosphoserine. Threonine 250 carries the phosphothreonine modification. A compositionally biased stretch (polar residues) spans 252–264 (ARQQCPQGHSATK). Serine 261 is subject to Phosphoserine. Phosphothreonine is present on residues threonine 323 and threonine 334. Residues serine 337 and serine 348 each carry the phosphoserine modification. Positions 354 to 427 (NYKPHKGKLK…RRNLGVTKAQ (74 aa)) are disordered. The KEN box motif lies at 369–375 (KENNSLN). Residues 393–425 (LQTREERWKRQEQERKEKKEKLLEARRNLGVTK) are a coiled coil. The segment covering 394-419 (QTREERWKRQEQERKEKKEKLLEARR) has biased composition (basic and acidic residues).

The protein belongs to the NUSAP family. As to quaternary structure, interacts with DNA and microtubules. Microtubule bundling is inhibited by IPO7, KPNA2 and KPNB1 while association with DNA is also inhibited by IPO7 and KPNA2. Post-translationally, ubiquitinated. Ubiquitination by FZR1 may lead to proteasome-dependent degradation of this protein.

The protein resides in the cytoplasm. It is found in the nucleus. Its subcellular location is the nucleolus. It localises to the cytoskeleton. The protein localises to the spindle. The protein resides in the chromosome. Microtubule-associated protein with the capacity to bundle and stabilize microtubules. May associate with chromosomes and promote the organization of mitotic spindle microtubules around them. The sequence is that of Nucleolar and spindle-associated protein 1 (Nusap1) from Mus musculus (Mouse).